A 76-amino-acid polypeptide reads, in one-letter code: Sulfur carrier protein TusA (76 aa).

Cysteine 14 acts as the Cysteine persulfide intermediate in catalysis.

It belongs to the sulfur carrier protein TusA family. As to quaternary structure, interacts with IscS.

It is found in the cytoplasm. It functions in the pathway tRNA modification. In terms of biological role, sulfur carrier protein involved in sulfur trafficking in the cell. Part of a sulfur-relay system required for 2-thiolation during synthesis of 2-thiouridine of the modified wobble base 5-methylaminomethyl-2-thiouridine (mnm(5)s(2)U) in tRNA. Interacts with IscS and stimulates its cysteine desulfurase activity. Accepts an activated sulfur from IscS, which is then transferred to TusD, and thus determines the direction of sulfur flow from IscS to 2-thiouridine formation. Also appears to be involved in sulfur transfer for the biosynthesis of molybdopterin. The polypeptide is Sulfur carrier protein TusA (Buchnera aphidicola subsp. Acyrthosiphon pisum (strain 5A)).